Here is a 142-residue protein sequence, read N- to C-terminus: Large ribosomal subunit protein uL13 (142 aa).

This sequence belongs to the universal ribosomal protein uL13 family. As to quaternary structure, part of the 50S ribosomal subunit.

Functionally, this protein is one of the early assembly proteins of the 50S ribosomal subunit, although it is not seen to bind rRNA by itself. It is important during the early stages of 50S assembly. The polypeptide is Large ribosomal subunit protein uL13 (Koribacter versatilis (strain Ellin345)).